Reading from the N-terminus, the 320-residue chain is Ferrochelatase (320 aa).

Fe cation is bound by residues His-194 and Glu-275.

The protein belongs to the ferrochelatase family.

Its subcellular location is the cytoplasm. The catalysed reaction is heme b + 2 H(+) = protoporphyrin IX + Fe(2+). The protein operates within porphyrin-containing compound metabolism; protoheme biosynthesis; protoheme from protoporphyrin-IX: step 1/1. In terms of biological role, catalyzes the ferrous insertion into protoporphyrin IX. The polypeptide is Ferrochelatase (Cronobacter sakazakii (strain ATCC BAA-894) (Enterobacter sakazakii)).